A 401-amino-acid polypeptide reads, in one-letter code: Dual-specificity RNA methyltransferase RlmN (401 aa).

E114 acts as the Proton acceptor in catalysis. The 246-residue stretch at 120–365 folds into the Radical SAM core domain; that stretch reads DKTRGTLCVS…TMVRRTRGDD (246 aa). C127 and C370 are disulfide-bonded. [4Fe-4S] cluster-binding residues include C134, C138, and C141. Residues 187–188, S219, 241–243, and N327 each bind S-adenosyl-L-methionine; these read GE and SLH. Catalysis depends on C370, which acts as the S-methylcysteine intermediate.

The protein belongs to the radical SAM superfamily. RlmN family. [4Fe-4S] cluster serves as cofactor.

It is found in the cytoplasm. The catalysed reaction is adenosine(2503) in 23S rRNA + 2 reduced [2Fe-2S]-[ferredoxin] + 2 S-adenosyl-L-methionine = 2-methyladenosine(2503) in 23S rRNA + 5'-deoxyadenosine + L-methionine + 2 oxidized [2Fe-2S]-[ferredoxin] + S-adenosyl-L-homocysteine. It catalyses the reaction adenosine(37) in tRNA + 2 reduced [2Fe-2S]-[ferredoxin] + 2 S-adenosyl-L-methionine = 2-methyladenosine(37) in tRNA + 5'-deoxyadenosine + L-methionine + 2 oxidized [2Fe-2S]-[ferredoxin] + S-adenosyl-L-homocysteine. In terms of biological role, specifically methylates position 2 of adenine 2503 in 23S rRNA and position 2 of adenine 37 in tRNAs. m2A2503 modification seems to play a crucial role in the proofreading step occurring at the peptidyl transferase center and thus would serve to optimize ribosomal fidelity. In Stenotrophomonas maltophilia (strain R551-3), this protein is Dual-specificity RNA methyltransferase RlmN.